Here is a 796-residue protein sequence, read N- to C-terminus: Disintegrin and metalloproteinase domain-containing protein B (796 aa).

Positions 1-23 are cleaved as a signal peptide; that stretch reads MKALSCLLAVIATAGSLFQHVDA. Residues 24-706 lie on the Extracellular side of the membrane; the sequence is RSHARDRLNN…VSDWVSRHKP (683 aa). Asn33, Asn226, Asn313, and Asn407 each carry an N-linked (GlcNAc...) asparagine glycan. One can recognise a Peptidase M12B domain in the interval 271–510; sequence RVALIGVVAD…HSILTNCLTT (240 aa). 3 disulfides stabilise this stretch: Cys395/Cys495, Cys448/Cys459, and Cys580/Cys600. His431 contacts Zn(2+). Glu432 is a catalytic residue. Zn(2+)-binding residues include His435 and His441. Residues 519–608 enclose the Disintegrin domain; sequence GQQCGNGIVE…DCPRDTHSKN (90 aa). A helical transmembrane segment spans residues 707–727; the sequence is IVIGVAVGVGCLLLLAILSCI. Topologically, residues 728–796 are cytoplasmic; sequence CGRSKKRRPR…PGRMPSTRYA (69 aa). Positions 737 to 796 are disordered; that stretch reads RNRKMAPINMRPMPPVYNGWTGPPPNAESPGGHPQYNHVPPPINAPPPAYPGRMPSTRYA. A compositionally biased stretch (pro residues) spans 775–786; sequence VPPPINAPPPAY.

It depends on Zn(2+) as a cofactor.

The protein localises to the membrane. Probable zinc protease. This Arthroderma otae (strain ATCC MYA-4605 / CBS 113480) (Microsporum canis) protein is Disintegrin and metalloproteinase domain-containing protein B (ADM-B).